The sequence spans 443 residues: Probable D-serine dehydratase (443 aa).

Lys-118 bears the N6-(pyridoxal phosphate)lysine mark.

This sequence belongs to the serine/threonine dehydratase family. DsdA subfamily. The cofactor is pyridoxal 5'-phosphate.

The catalysed reaction is D-serine = pyruvate + NH4(+). In Vibrio parahaemolyticus serotype O3:K6 (strain RIMD 2210633), this protein is Probable D-serine dehydratase.